Reading from the N-terminus, the 358-residue chain is MKPSILEKLQQLSDRLEEVTHLLGQPEATSDMDNYRKLTREHAELTPVVEVFQNYRLAQSDLADAEEMLSDPEMKDFAAEEIEAAKAKIGELDTELQKLLLPKDADDDKNIFIEIRAGTGGDEAALFAGDLLRMYSRYAERNRWQVEIVSANESELGGYKEVIARIVGLGAYSRLKFESGGHRVQRVPATESQGRIHTSACTVAVMPEADELEDIELNPADLRIDTFRASGAGGQHINKTDSAVRITHLPTGMVVECQDGRSQHANKAQAMKVLAARLNDAQKREAQAKEAAERKSLIGSGDRSERIRTYNYPQGRVTDHRINLTLHKLDFVMDGDLEEITNALIAEHQAELLAAMGD.

The residue at position 235 (Gln-235) is an N5-methylglutamine.

It belongs to the prokaryotic/mitochondrial release factor family. In terms of processing, methylated by PrmC. Methylation increases the termination efficiency of RF1.

It is found in the cytoplasm. Functionally, peptide chain release factor 1 directs the termination of translation in response to the peptide chain termination codons UAG and UAA. This is Peptide chain release factor 1 from Neisseria meningitidis serogroup B (strain ATCC BAA-335 / MC58).